Consider the following 421-residue polypeptide: MSSPGNVRQKHGRDNDEHEGDSDDLNLQKSLPSSSQQKTPTKPVFGNKVNSESVKTSHHMSFSNKYDLVFPEPVESDNDETLWDVRDLSHRNRWSSVDPESAGPSKTVSTVLSESSTDTAVSERELTQLAQIRPLIFNSSSRAALRDCLKALQKKEELDIIREFLELEEMIPPDDFKSGYELQNRDKNRYRDILPYDSTRVPLGKNKDYINASYIRIVNHEEEYFYIATQGPLPDTIEDFWQMVLENNCNVIAMITREIEGGVIKCCSYWPVSLKEPLEFKHFHVLLENFQITQYFVIRIFQIVKKSTGKSHSVKHLQFIKWPDHGTPASADFFIKYVRYVRKSHITGPLLVHCSAGVGRTGVFICVDVVFCTIEKNYSFNIMNIVTQMRKQRFGMIQTKEQYQFCYEIVLEVLQNLLALN.

A disordered region spans residues methionine 1–histidine 58. Over residues leucine 27–threonine 41 the composition is skewed to low complexity. Positions lysine 48 to histidine 58 are enriched in polar residues. Serine 76 bears the Phosphoserine mark. The tract at residues arginine 93–serine 116 is disordered. Over residues proline 104–serine 116 the composition is skewed to polar residues. Residue serine 122 is modified to Phosphoserine. A Tyrosine-protein phosphatase domain is found at isoleucine 160 to valine 413. Residues aspartate 324, cysteine 354–arginine 360, and glutamine 398 each bind substrate. Cysteine 354 functions as the Phosphocysteine intermediate in the catalytic mechanism.

It belongs to the protein-tyrosine phosphatase family. Non-receptor class subfamily.

It is found in the nucleus. It localises to the cytoplasm. The protein resides in the cytoskeleton. Its subcellular location is the microtubule organizing center. The protein localises to the centrosome. The catalysed reaction is O-phospho-L-tyrosyl-[protein] + H2O = L-tyrosyl-[protein] + phosphate. Its function is as follows. Tyrosine-protein phosphatase targeted to sites of actin polymerization in response of varied extracellular stimuli. Has tyrosine phosphatase activity towards various tyrosyl phosphorylated substrates. In Rattus norvegicus (Rat), this protein is Tyrosine-protein phosphatase non-receptor type 20 (Ptpn20).